The following is a 126-amino-acid chain: Arginine decarboxylase proenzyme (126 aa).

Ser-74 acts as the Schiff-base intermediate with substrate; via pyruvic acid in catalysis. Ser-74 is subject to Pyruvic acid (Ser); by autocatalysis. His-79 acts as the Proton acceptor; for processing activity in catalysis. Cys-94 acts as the Proton donor; for catalytic activity in catalysis.

Belongs to the prokaryotic AdoMetDC family. Type 1 subfamily. Heterooctamer of four alpha and four beta chains arranged as a tetramer of alpha/beta heterodimers. Pyruvate is required as a cofactor. In terms of processing, is synthesized initially as an inactive proenzyme. Formation of the active enzyme involves a self-maturation process in which the active site pyruvoyl group is generated from an internal serine residue via an autocatalytic post-translational modification. Two non-identical subunits are generated from the proenzyme in this reaction, and the pyruvate is formed at the N-terminus of the alpha chain, which is derived from the carboxyl end of the proenzyme. The post-translation cleavage follows an unusual pathway, termed non-hydrolytic serinolysis, in which the side chain hydroxyl group of the serine supplies its oxygen atom to form the C-terminus of the beta chain, while the remainder of the serine residue undergoes an oxidative deamination to produce ammonia and the pyruvoyl group blocking the N-terminus of the alpha chain.

The catalysed reaction is L-arginine + H(+) = agmatine + CO2. The protein operates within amine and polyamine biosynthesis; agmatine biosynthesis; agmatine from L-arginine: step 1/1. Functionally, specifically catalyzes the decarboxylation of L-arginine to agmatine. Has no S-adenosylmethionine decarboxylase (AdoMetDC) activity. The chain is Arginine decarboxylase proenzyme from Pyrobaculum islandicum (strain DSM 4184 / JCM 9189 / GEO3).